The following is a 156-amino-acid chain: Putative pre-16S rRNA nuclease (156 aa).

It belongs to the YqgF nuclease family.

It is found in the cytoplasm. Could be a nuclease involved in processing of the 5'-end of pre-16S rRNA. This chain is Putative pre-16S rRNA nuclease, found in Ehrlichia ruminantium (strain Gardel).